Here is a 511-residue protein sequence, read N- to C-terminus: 2,3-bisphosphoglycerate-independent phosphoglycerate mutase (511 aa).

The Mn(2+) site is built by Asp-14 and Ser-64. Residue Ser-64 is the Phosphoserine intermediate of the active site. Substrate-binding positions include His-125, 155-156 (RD), Arg-187, Arg-193, 259-262 (RADR), and Lys-333. Mn(2+) is bound by residues Asp-400, His-404, Asp-441, His-442, and His-460.

The protein belongs to the BPG-independent phosphoglycerate mutase family. In terms of assembly, monomer. It depends on Mn(2+) as a cofactor.

It catalyses the reaction (2R)-2-phosphoglycerate = (2R)-3-phosphoglycerate. The protein operates within carbohydrate degradation; glycolysis; pyruvate from D-glyceraldehyde 3-phosphate: step 3/5. In terms of biological role, catalyzes the interconversion of 2-phosphoglycerate and 3-phosphoglycerate. The sequence is that of 2,3-bisphosphoglycerate-independent phosphoglycerate mutase from Pseudomonas putida (strain GB-1).